A 103-amino-acid polypeptide reads, in one-letter code: Large ribosomal subunit protein eL14 (103 aa).

The protein belongs to the eukaryotic ribosomal protein eL14 family.

The sequence is that of Large ribosomal subunit protein eL14 from Pyrobaculum aerophilum (strain ATCC 51768 / DSM 7523 / JCM 9630 / CIP 104966 / NBRC 100827 / IM2).